A 166-amino-acid chain; its full sequence is Anterior gradient protein 3 (166 aa).

The first 21 residues, 1–21 (MMLHSALGLCLLLVTVSSNLA), serve as a signal peptide directing secretion. A Prevents secretion from ER motif is present at residues 163–166 (QSEL).

The protein belongs to the AGR family. In terms of assembly, interacts with LYPD3 and DAG1 (alphaDAG1). As to expression, expressed in the lung, in the ciliated cells of the airway epithelium. Expression increased with differentiation of airway epithelial cells. Not detected in the mucous cells. Expressed in ciliated cells in the oviduct. Also detected in stomach, colon, prostate and liver. Expressed in breast, ovary, prostate and liver cancer. Expression is associated with the level of differentiation of breast cancer (at protein level).

Its subcellular location is the endoplasmic reticulum. Functionally, required for calcium-mediated regulation of ciliary beat frequency and mucociliary clearance in the airway. Might be involved in the regulation of intracellular calcium in tracheal epithelial cells. This Homo sapiens (Human) protein is Anterior gradient protein 3 (AGR3).